The following is a 166-amino-acid chain: FMN reductase (NADH) RutF (166 aa).

It belongs to the non-flavoprotein flavin reductase family. RutF subfamily.

The catalysed reaction is FMNH2 + NAD(+) = FMN + NADH + 2 H(+). In terms of biological role, catalyzes the reduction of FMN to FMNH2 which is used to reduce pyrimidine by RutA via the Rut pathway. The protein is FMN reductase (NADH) RutF of Cronobacter turicensis (strain DSM 18703 / CCUG 55852 / LMG 23827 / z3032).